The following is a 712-amino-acid chain: NURS complex subunit red1 (712 aa).

Residues methionine 1–glutamate 22 are compositionally biased toward basic and acidic residues. Disordered regions lie at residues methionine 1–proline 71, asparagine 107–glutamine 195, and aspartate 323–methionine 348. Positions isoleucine 5–glutamate 32 form a coiled coil. Acidic residues predominate over residues glutamate 23–valine 42. Low complexity predominate over residues serine 130–serine 141. 2 stretches are compositionally biased toward polar residues: residues phenylalanine 178–threonine 193 and asparagine 327–methionine 348. A coiled-coil region spans residues serine 351–lysine 379. The disordered stretch occupies residues proline 428–threonine 447. Residues alanine 471 to serine 501 adopt a coiled-coil conformation. Polar residues predominate over residues glutamine 545–glutamate 567. A disordered region spans residues glutamine 545–threonine 568. A C3H1-type zinc finger spans residues phenylalanine 618–arginine 639.

As to quaternary structure, interacts with mmi1, pla1 and rrp6.

Its subcellular location is the nucleus. Promotes the exosome-mediated degradation of mRNAs containing a DSR (determinant of selective removal) signal sequence from mitotic cells. The chain is NURS complex subunit red1 from Schizosaccharomyces pombe (strain 972 / ATCC 24843) (Fission yeast).